The sequence spans 368 residues: 3-dehydroquinate synthase (368 aa).

Residues 71 to 76 (DGEAFK), 105 to 109 (GVVGD), 129 to 130 (TT), K142, K151, and 169 to 172 (TLRT) each bind NAD(+). Positions 184, 247, and 264 each coordinate Zn(2+).

It belongs to the sugar phosphate cyclases superfamily. Dehydroquinate synthase family. The cofactor is Co(2+). Zn(2+) is required as a cofactor. Requires NAD(+) as cofactor.

The protein resides in the cytoplasm. It carries out the reaction 7-phospho-2-dehydro-3-deoxy-D-arabino-heptonate = 3-dehydroquinate + phosphate. Its pathway is metabolic intermediate biosynthesis; chorismate biosynthesis; chorismate from D-erythrose 4-phosphate and phosphoenolpyruvate: step 2/7. Catalyzes the conversion of 3-deoxy-D-arabino-heptulosonate 7-phosphate (DAHP) to dehydroquinate (DHQ). The protein is 3-dehydroquinate synthase of Cupriavidus taiwanensis (strain DSM 17343 / BCRC 17206 / CCUG 44338 / CIP 107171 / LMG 19424 / R1) (Ralstonia taiwanensis (strain LMG 19424)).